The sequence spans 433 residues: uncharacterized protein (433 aa).

Residues 36-58 form a helical membrane-spanning segment; that stretch reads YYYYVQLAFKMLVGVLKNLPVVY. The tract at residues 169-433 is disordered; the sequence is VRVPSRDLQP…GEGRDLPEDN (265 aa). 2 stretches are compositionally biased toward acidic residues: residues 216–227 and 234–254; these read GEPGENGDESDE and GDED…YESD. Composition is skewed to basic and acidic residues over residues 265–280, 354–364, and 422–433; these read EPDR…RGSE, GGRRPARRDSP, and RRGEGRDLPEDN.

The protein localises to the host membrane. This is an uncharacterized protein from Psittacid herpesvirus 1 (isolate Amazon parrot/-/97-0001/1997) (PsHV-1).